The following is a 529-amino-acid chain: Glutamyl-tRNA(Gln) amidotransferase subunit B-2, chloroplastic/mitochondrial (529 aa).

Residues 17 to 61 are disordered; that stretch reads STRVSLPRGSIPPPPTSSSSSSSSSREGRRPRFFSTTTTSAERPV.

Belongs to the GatB/GatE family. GatB subfamily. Subunit of the heterotrimeric GatCAB amidotransferase (AdT) complex, composed of A, B and C subunits.

The protein resides in the mitochondrion. The protein localises to the plastid. It is found in the chloroplast. It carries out the reaction L-glutamyl-tRNA(Gln) + L-glutamine + ATP + H2O = L-glutaminyl-tRNA(Gln) + L-glutamate + ADP + phosphate + H(+). Its function is as follows. Allows the formation of correctly charged Gln-tRNA(Gln) through the transamidation of misacylated Glu-tRNA(Gln) in chloroplasts and mitochondria. The reaction takes place in the presence of glutamine and ATP through an activated gamma-phospho-Glu-tRNA(Gln). The polypeptide is Glutamyl-tRNA(Gln) amidotransferase subunit B-2, chloroplastic/mitochondrial (Micromonas commoda (strain RCC299 / NOUM17 / CCMP2709) (Picoplanktonic green alga)).